The following is a 546-amino-acid chain: MFS-type transporter patC (546 aa).

A compositionally biased stretch (polar residues) spans 1–15 (MSIDASPSESVLESQ). Residues 1-29 (MSIDASPSESVLESQTPDRVDESIPIKAE) form a disordered region. Basic and acidic residues predominate over residues 16–29 (TPDRVDESIPIKAE). A run of 14 helical transmembrane segments spans residues 41–61 (IVGF…LLYG), 89–109 (VGFT…YAIF), 113–133 (WLFL…GAAP), 143–163 (VWAG…ITIL), 171–191 (VYVG…PIIG), 203–223 (WSFY…VFLL), 245–265 (WVGT…IVFG), 277–297 (IALY…QYFC), 318–338 (LLLY…VYYI), 350–370 (GIMS…TILL), 379–399 (GYFI…AVLM), 416–436 (ILMG…PAIV), 447–467 (FMNI…SAIF), and 515–535 (VIVS…ALYV).

This sequence belongs to the major facilitator superfamily. TCR/Tet family.

It is found in the vacuole membrane. It localises to the cell membrane. Its function is as follows. MFS-type transporter; part of the gene cluster that mediates the biosynthesis of patulin, an acetate-derived tetraketide mycotoxin produced by several fungal species that shows antimicrobial properties against several bacteria. May be involved in the secretion of E-ascladiol to be converted to patulin by the secreted patulin synthase patE. The chain is MFS-type transporter patC from Penicillium expansum (Blue mold rot fungus).